Consider the following 513-residue polypeptide: 2,3-bisphosphoglycerate-independent phosphoglycerate mutase (513 aa).

Residues aspartate 12 and serine 62 each coordinate Mn(2+). The active-site Phosphoserine intermediate is serine 62. Residues histidine 123, 153–154, arginine 185, arginine 191, 261–264, and lysine 335 contribute to the substrate site; these read RD and RSDR. Positions 402, 406, 443, 444, and 462 each coordinate Mn(2+).

This sequence belongs to the BPG-independent phosphoglycerate mutase family. In terms of assembly, monomer. The cofactor is Mn(2+).

It carries out the reaction (2R)-2-phosphoglycerate = (2R)-3-phosphoglycerate. It functions in the pathway carbohydrate degradation; glycolysis; pyruvate from D-glyceraldehyde 3-phosphate: step 3/5. Catalyzes the interconversion of 2-phosphoglycerate and 3-phosphoglycerate. This chain is 2,3-bisphosphoglycerate-independent phosphoglycerate mutase, found in Thiobacillus denitrificans (strain ATCC 25259 / T1).